The following is a 522-amino-acid chain: Peptide chain release factor 3 (522 aa).

The tr-type G domain occupies 10–277 (ASRKTFAIIS…TFVDFAPAPS (268 aa)). GTP contacts are provided by residues 19 to 26 (SHPDAGKT), 87 to 91 (DTPGH), and 141 to 144 (NKMD).

Belongs to the TRAFAC class translation factor GTPase superfamily. Classic translation factor GTPase family. PrfC subfamily.

Its subcellular location is the cytoplasm. Its function is as follows. Increases the formation of ribosomal termination complexes and stimulates activities of RF-1 and RF-2. It binds guanine nucleotides and has strong preference for UGA stop codons. It may interact directly with the ribosome. The stimulation of RF-1 and RF-2 is significantly reduced by GTP and GDP, but not by GMP. The sequence is that of Peptide chain release factor 3 from Listeria monocytogenes serovar 1/2a (strain ATCC BAA-679 / EGD-e).